Consider the following 103-residue polypeptide: MAAVSLSVSTVKPLGDRVFIKVSESEEKTAGGILLPDTAKEKPQVGEVVQVGPGKRNDDGSRQAPEVGVGDKVLYSKYAGTDIKLGGDEFVLLTEKDILAIVN.

It belongs to the GroES chaperonin family. As to quaternary structure, heptamer of 7 subunits arranged in a ring. Interacts with the chaperonin GroEL.

It localises to the cytoplasm. Together with the chaperonin GroEL, plays an essential role in assisting protein folding. The GroEL-GroES system forms a nano-cage that allows encapsulation of the non-native substrate proteins and provides a physical environment optimized to promote and accelerate protein folding. GroES binds to the apical surface of the GroEL ring, thereby capping the opening of the GroEL channel. The polypeptide is Co-chaperonin GroES (Parasynechococcus marenigrum (strain WH8102)).